A 132-amino-acid polypeptide reads, in one-letter code: UPF0299 membrane protein YohJ (132 aa).

The next 4 helical transmembrane spans lie at 7–27, 31–51, 63–83, and 93–113; these read IIWQYIRAFVLIYACLYAGIF, LLPITIPGSIIGMLILFVLLA, GCYVLIRYMALLFVPIGVGVM, and FGPVVVSCAISTLVVFVVVSW.

It belongs to the UPF0299 family.

Its subcellular location is the cell inner membrane. This is UPF0299 membrane protein YohJ from Salmonella arizonae (strain ATCC BAA-731 / CDC346-86 / RSK2980).